We begin with the raw amino-acid sequence, 461 residues long: Methylthioribose transporter (461 aa).

The next 12 helical transmembrane spans lie at Leu-33–Ala-53, Ala-56–Phe-76, Leu-102–Val-122, Met-152–Val-172, Val-185–Val-205, Phe-213–Leu-233, Val-254–Leu-274, Val-301–Leu-321, Thr-355–Ala-375, His-376–Leu-396, Val-409–Ser-429, and Gly-432–Tyr-452.

It belongs to the amino acid-polyamine-organocation (APC) superfamily.

It localises to the cell membrane. Involved in import of methylthioribose (MTR) into the cell. This is Methylthioribose transporter from Bacillus subtilis (strain 168).